The chain runs to 426 residues: Meiotically up-regulated gene 170 protein (426 aa).

Belongs to the arrestin family.

The protein localises to the cytoplasm. It localises to the nucleus. In terms of biological role, has a role in meiosis. The sequence is that of Meiotically up-regulated gene 170 protein (mug170) from Schizosaccharomyces pombe (strain 972 / ATCC 24843) (Fission yeast).